The sequence spans 294 residues: HTH-type transcriptional regulator TcbR (294 aa).

The HTH lysR-type domain maps to 1 to 58 (MEFRQLKYFIAVAEAGNMAAAAKRLHVSQPPITRQMQALEADLGVVLLERSHRGIELT). The segment at residues 18 to 37 (MAAAAKRLHVSQPPITRQMQ) is a DNA-binding region (H-T-H motif).

The protein belongs to the LysR transcriptional regulatory family.

Functionally, involved in regulation of chlorinated catechol metabolism. Transcriptional activator of the tcbCDEF chlorocatechol oxidative operon. May bind 2-chloromuconate as an inducer. The chain is HTH-type transcriptional regulator TcbR (tcbR) from Pseudomonas sp. (strain P51).